An 89-amino-acid polypeptide reads, in one-letter code: Large ribosomal subunit protein bL27 (89 aa).

The tract at residues 1–22 (MAHKKGASSSRNGRDSNAQRLG) is disordered. Over residues 7 to 19 (ASSSRNGRDSNAQ) the composition is skewed to polar residues.

Belongs to the bacterial ribosomal protein bL27 family.

This Cutibacterium acnes (strain DSM 16379 / KPA171202) (Propionibacterium acnes) protein is Large ribosomal subunit protein bL27.